We begin with the raw amino-acid sequence, 223 residues long: Neurotrophic factor BDNF precursor form (223 aa).

The signal sequence occupies residues 1-5; that stretch reads SCMKA. The propeptide occupies 6–114; it reads APMKEASIRG…AANMSMRVRR (109 aa). Asn-107 carries N-linked (GlcNAc...) asparagine glycosylation. Intrachain disulfides connect Cys-127–Cys-194 and Cys-172–Cys-223.

The protein belongs to the NGF-beta family.

It localises to the secreted. In terms of biological role, promotes the survival of neuronal populations that are all located either in the central nervous system or directly connected to it. In Tropidophis haetianus (Haitian dwarf boa), this protein is Neurotrophic factor BDNF precursor form (BDNF).